The primary structure comprises 428 residues: 3-phosphoshikimate 1-carboxyvinyltransferase (428 aa).

3-phosphoshikimate is bound by residues K22, S23, and R27. A phosphoenolpyruvate-binding site is contributed by K22. Residues G96 and R124 each coordinate phosphoenolpyruvate. 3-phosphoshikimate is bound by residues S170, S171, Q172, S198, D314, N337, and K341. Phosphoenolpyruvate is bound at residue Q172. Catalysis depends on D314, which acts as the Proton acceptor. 3 residues coordinate phosphoenolpyruvate: R345, R387, and K412.

This sequence belongs to the EPSP synthase family. As to quaternary structure, monomer.

Its subcellular location is the cytoplasm. The enzyme catalyses 3-phosphoshikimate + phosphoenolpyruvate = 5-O-(1-carboxyvinyl)-3-phosphoshikimate + phosphate. Its pathway is metabolic intermediate biosynthesis; chorismate biosynthesis; chorismate from D-erythrose 4-phosphate and phosphoenolpyruvate: step 6/7. In terms of biological role, catalyzes the transfer of the enolpyruvyl moiety of phosphoenolpyruvate (PEP) to the 5-hydroxyl of shikimate-3-phosphate (S3P) to produce enolpyruvyl shikimate-3-phosphate and inorganic phosphate. The protein is 3-phosphoshikimate 1-carboxyvinyltransferase of Vibrio vulnificus (strain YJ016).